The chain runs to 206 residues: Holliday junction branch migration complex subunit RuvA (206 aa).

The interval 1 to 64 (MIGRLSGTIL…EDAQLLYGFN (64 aa)) is domain I. A domain II region spans residues 65–143 (KKSERELFRE…GWGEGDLFTP (79 aa)). The segment at 144–157 (ASDAAASNAEIQKY) is flexible linker. Positions 158–206 (SSARAEDEAVSALIALGYKALQAAKVVSQVVKPEMSSENIIREALRSMV) are domain III.

The protein belongs to the RuvA family. Homotetramer. Forms an RuvA(8)-RuvB(12)-Holliday junction (HJ) complex. HJ DNA is sandwiched between 2 RuvA tetramers; dsDNA enters through RuvA and exits via RuvB. An RuvB hexamer assembles on each DNA strand where it exits the tetramer. Each RuvB hexamer is contacted by two RuvA subunits (via domain III) on 2 adjacent RuvB subunits; this complex drives branch migration. In the full resolvosome a probable DNA-RuvA(4)-RuvB(12)-RuvC(2) complex forms which resolves the HJ.

The protein resides in the cytoplasm. Functionally, the RuvA-RuvB-RuvC complex processes Holliday junction (HJ) DNA during genetic recombination and DNA repair, while the RuvA-RuvB complex plays an important role in the rescue of blocked DNA replication forks via replication fork reversal (RFR). RuvA specifically binds to HJ cruciform DNA, conferring on it an open structure. The RuvB hexamer acts as an ATP-dependent pump, pulling dsDNA into and through the RuvAB complex. HJ branch migration allows RuvC to scan DNA until it finds its consensus sequence, where it cleaves and resolves the cruciform DNA. In Photobacterium profundum (strain SS9), this protein is Holliday junction branch migration complex subunit RuvA.